The following is a 193-amino-acid chain: Probable gluconokinase (193 aa).

Glycine 18–serine 25 lines the ATP pocket.

It belongs to the gluconokinase GntK/GntV family.

The protein resides in the cytoplasm. The catalysed reaction is D-gluconate + ATP = 6-phospho-D-gluconate + ADP + H(+). It participates in carbohydrate acid metabolism; D-gluconate degradation. In Saccharomyces cerevisiae (strain ATCC 204508 / S288c) (Baker's yeast), this protein is Probable gluconokinase.